The sequence spans 297 residues: MKDNIVIITGITASGKSELCDNLIKKHKNISIINCDSKQVYKEIPVITAQPPKQKEFYRLYGYVSARENYSVGLWLEDLKREVNNALKNSRIPIITGGSGLYISSLIKGLSSIPQISQEVRENVNELRKNLSKEEFYKLVLSKDPRIQGKIFINDSHRLSRALEVITETGKTIFVWQENRQPPLFNNFKVYTILPKREDIYRKINSRFIEMVENGAIDEVKNLLSMNPSPHLPAMKAHGVPEIIRYLKGEITLDEAIQIAQTNTRHYAKRQYTWFKNQFPNSQVIDCANKLTEFGIF.

10-17 (GITASGKS) lines the ATP pocket. 12–17 (TASGKS) serves as a coordination point for substrate. Positions 36–39 (DSKQ) are interaction with substrate tRNA.

This sequence belongs to the IPP transferase family. Monomer. The cofactor is Mg(2+).

The catalysed reaction is adenosine(37) in tRNA + dimethylallyl diphosphate = N(6)-dimethylallyladenosine(37) in tRNA + diphosphate. Its function is as follows. Catalyzes the transfer of a dimethylallyl group onto the adenine at position 37 in tRNAs that read codons beginning with uridine, leading to the formation of N6-(dimethylallyl)adenosine (i(6)A). The polypeptide is tRNA dimethylallyltransferase (Wolbachia pipientis subsp. Culex pipiens (strain wPip)).